We begin with the raw amino-acid sequence, 218 residues long: Ras-related protein Rab-27B (218 aa).

Position 2 is an N-acetylthreonine (threonine 2). 16-24 (GDSGVGKTT) provides a ligand contact to GTP. The Effector region signature appears at 38-46 (FITTVGIDF). GTP contacts are provided by residues 74-78 (DTAGQ), 133-136 (NKAD), and 163-165 (SAA). A disulfide bond links cysteine 123 and cysteine 188. A disordered region spans residues 193–218 (HIPDTVNGSSSGKLDGEKSAEKKCAC). A compositionally biased stretch (basic and acidic residues) spans 206–218 (LDGEKSAEKKCAC). Residues cysteine 216 and cysteine 218 are each lipidated (S-geranylgeranyl cysteine). Cysteine 218 bears the Cysteine methyl ester mark.

The protein belongs to the small GTPase superfamily. Rab family. As to quaternary structure, interacts with SYTL2, SYTL4, MYRIP and MLPH. Interacts with RPH3A and RPH3A. Interacts (GDP-bound form preferentially) with DENND10. In terms of tissue distribution, expressed at an extraordinary high level (0.1% of total protein) in urothelium.

It localises to the membrane. The protein localises to the late endosome. The enzyme catalyses GTP + H2O = GDP + phosphate + H(+). With respect to regulation, regulated by guanine nucleotide exchange factors (GEFs) which promote the exchange of bound GDP for free GTP, GTPase activating proteins (GAPs) which increase the GTP hydrolysis activity, and GDP dissociation inhibitors which inhibit the dissociation of the nucleotide from the GTPase. Activated by GEFs such as DENND10. Functionally, small GTPase which cycles between active GTP-bound and inactive GDP-bound states. In its active state, binds to a variety of effector proteins to regulate homeostasis of late endocytic pathway, including endosomal positioning, maturation and secretion. Plays a role in NTRK2/TRKB axonal anterograde transport by facilitating the association of NTRK2/TRKB with KLC1. May be involved in targeting uroplakins to urothelial apical membranes. The chain is Ras-related protein Rab-27B (RAB27B) from Bos taurus (Bovine).